Reading from the N-terminus, the 909-residue chain is Protein translocase subunit SecA (909 aa).

ATP is bound by residues glutamine 87, glycine 105 to threonine 109, and aspartate 507. The tract at residues glutamate 834 to serine 909 is disordered. Over residues glutamate 837–tyrosine 848 the composition is skewed to basic and acidic residues. Residues glutamine 859–alanine 871 show a composition bias toward gly residues. Cysteine 893, cysteine 895, cysteine 904, and cysteine 905 together coordinate Zn(2+).

Belongs to the SecA family. Monomer and homodimer. Part of the essential Sec protein translocation apparatus which comprises SecA, SecYEG and auxiliary proteins SecDF-YajC and YidC. Zn(2+) is required as a cofactor.

The protein localises to the cell inner membrane. It is found in the cytoplasm. It carries out the reaction ATP + H2O + cellular proteinSide 1 = ADP + phosphate + cellular proteinSide 2.. Part of the Sec protein translocase complex. Interacts with the SecYEG preprotein conducting channel. Has a central role in coupling the hydrolysis of ATP to the transfer of proteins into and across the cell membrane, serving both as a receptor for the preprotein-SecB complex and as an ATP-driven molecular motor driving the stepwise translocation of polypeptide chains across the membrane. The sequence is that of Protein translocase subunit SecA from Alkalilimnicola ehrlichii (strain ATCC BAA-1101 / DSM 17681 / MLHE-1).